Reading from the N-terminus, the 449-residue chain is Hyaluronidase-3 (449 aa).

A signal peptide spans 1 to 23; that stretch reads MYHIWIKFLAAWIFLKKFNGVHV. Disulfide bonds link C47-C340 and C211-C227. 3 N-linked (GlcNAc...) asparagine glycosylation sites follow: N67, N103, and N111. E135 acts as the Proton donor in catalysis. The N-linked (GlcNAc...) asparagine glycan is linked to N153. N-linked (GlcNAc...) asparagine glycosylation is present at N357. 3 disulfides stabilise this stretch: C365–C376, C370–C427, and C429–C438. N401 is a glycosylation site (N-linked (GlcNAc...) asparagine). The EGF-like domain occupies 427 to 438; sequence CQCYQGWKGLYC.

This sequence belongs to the glycosyl hydrolase 56 family. In terms of assembly, monomer. In terms of tissue distribution, expressed by the venom gland.

It is found in the secreted. It carries out the reaction Random hydrolysis of (1-&gt;4)-linkages between N-acetyl-beta-D-glucosamine and D-glucuronate residues in hyaluronate.. Functionally, snake venom endo-hyaluronidase that degrades hyaluronan to smaller oligosaccharide fragments. In venom, it is not toxic by itself, but increases the diffusion of other venom proteins by degrading the extracellular matrix. In addition, it displays antiedematogenic activity. This is Hyaluronidase-3 from Cerastes cerastes (Horned desert viper).